Reading from the N-terminus, the 378-residue chain is Succinyl-diaminopimelate desuccinylase (378 aa).

H68 provides a ligand contact to Zn(2+). D70 is an active-site residue. D101 serves as a coordination point for Zn(2+). E135 serves as the catalytic Proton acceptor. Zn(2+) contacts are provided by E136, E164, and H350.

The protein belongs to the peptidase M20A family. DapE subfamily. As to quaternary structure, homodimer. Requires Zn(2+) as cofactor. The cofactor is Co(2+).

The catalysed reaction is N-succinyl-(2S,6S)-2,6-diaminopimelate + H2O = (2S,6S)-2,6-diaminopimelate + succinate. It functions in the pathway amino-acid biosynthesis; L-lysine biosynthesis via DAP pathway; LL-2,6-diaminopimelate from (S)-tetrahydrodipicolinate (succinylase route): step 3/3. Its function is as follows. Catalyzes the hydrolysis of N-succinyl-L,L-diaminopimelic acid (SDAP), forming succinate and LL-2,6-diaminopimelate (DAP), an intermediate involved in the bacterial biosynthesis of lysine and meso-diaminopimelic acid, an essential component of bacterial cell walls. The polypeptide is Succinyl-diaminopimelate desuccinylase (Vibrio parahaemolyticus serotype O3:K6 (strain RIMD 2210633)).